The chain runs to 96 residues: Small ribosomal subunit protein bS6 (96 aa).

This sequence belongs to the bacterial ribosomal protein bS6 family.

Binds together with bS18 to 16S ribosomal RNA. The chain is Small ribosomal subunit protein bS6 from Streptomyces griseus subsp. griseus (strain JCM 4626 / CBS 651.72 / NBRC 13350 / KCC S-0626 / ISP 5235).